The following is a 244-amino-acid chain: 7-cyano-7-deazaguanine synthase (244 aa).

Residue 14–24 (FSGGQDSATCV) coordinates ATP. Positions 202, 217, 220, and 223 each coordinate Zn(2+).

It belongs to the QueC family. The cofactor is Zn(2+).

The enzyme catalyses 7-carboxy-7-deazaguanine + NH4(+) + ATP = 7-cyano-7-deazaguanine + ADP + phosphate + H2O + H(+). It participates in purine metabolism; 7-cyano-7-deazaguanine biosynthesis. In terms of biological role, catalyzes the ATP-dependent conversion of 7-carboxy-7-deazaguanine (CDG) to 7-cyano-7-deazaguanine (preQ(0)). This Burkholderia ambifaria (strain MC40-6) protein is 7-cyano-7-deazaguanine synthase.